The following is a 449-amino-acid chain: tRNA(Ile)-lysidine synthase (449 aa).

Residue 35–40 (SGGIDS) coordinates ATP.

Belongs to the tRNA(Ile)-lysidine synthase family.

It is found in the cytoplasm. It catalyses the reaction cytidine(34) in tRNA(Ile2) + L-lysine + ATP = lysidine(34) in tRNA(Ile2) + AMP + diphosphate + H(+). Its function is as follows. Ligates lysine onto the cytidine present at position 34 of the AUA codon-specific tRNA(Ile) that contains the anticodon CAU, in an ATP-dependent manner. Cytidine is converted to lysidine, thus changing the amino acid specificity of the tRNA from methionine to isoleucine. The polypeptide is tRNA(Ile)-lysidine synthase (Coxiella burnetii (strain RSA 493 / Nine Mile phase I)).